The chain runs to 189 residues: Peptidyl-tRNA hydrolase (189 aa).

Y15 is a tRNA binding site. H20 (proton acceptor) is an active-site residue. TRNA is bound by residues F64 and N66.

The protein belongs to the PTH family. Monomer.

It localises to the cytoplasm. It carries out the reaction an N-acyl-L-alpha-aminoacyl-tRNA + H2O = an N-acyl-L-amino acid + a tRNA + H(+). Functionally, hydrolyzes ribosome-free peptidyl-tRNAs (with 1 or more amino acids incorporated), which drop off the ribosome during protein synthesis, or as a result of ribosome stalling. Its function is as follows. Catalyzes the release of premature peptidyl moieties from peptidyl-tRNA molecules trapped in stalled 50S ribosomal subunits, and thus maintains levels of free tRNAs and 50S ribosomes. The protein is Peptidyl-tRNA hydrolase of Persephonella marina (strain DSM 14350 / EX-H1).